Here is a 227-residue protein sequence, read N- to C-terminus: ATP-dependent dethiobiotin synthetase BioD (227 aa).

ATP is bound at residue 12 to 17 (DVGKTV). Residue T16 coordinates Mg(2+). The active site involves K37. T41 contacts substrate. ATP is bound by residues D50, 110–113 (EGAG), 171–172 (GS), and 201–203 (PAG). Mg(2+) contacts are provided by D50 and E110.

It belongs to the dethiobiotin synthetase family. Homodimer. Requires Mg(2+) as cofactor.

The protein localises to the cytoplasm. The catalysed reaction is (7R,8S)-7,8-diammoniononanoate + CO2 + ATP = (4R,5S)-dethiobiotin + ADP + phosphate + 3 H(+). Its pathway is cofactor biosynthesis; biotin biosynthesis; biotin from 7,8-diaminononanoate: step 1/2. Its function is as follows. Catalyzes a mechanistically unusual reaction, the ATP-dependent insertion of CO2 between the N7 and N8 nitrogen atoms of 7,8-diaminopelargonic acid (DAPA, also called 7,8-diammoniononanoate) to form a ureido ring. The chain is ATP-dependent dethiobiotin synthetase BioD from Rhodococcus erythropolis (strain PR4 / NBRC 100887).